The following is an 898-amino-acid chain: MRKGVLKDPEIADLFYKDDPEELFIGLHEIGHGSFGAVYFATNAHTNEVVAIKKMSYSGKQTHEKWQDILKEVKFLRQLKHPNTIEYKGCYLKEHTAWLVMEYCLGSASDLLEVHKKPLQEVEIAAITHGALHGLAYLHSHALIHRDIKAGNILLTEPGQVKLADFGSASVASPANSFVGTPYWMAPEVILAMDEGQYDGKVDVWSLGITCIELAERKPALFNMNAMSALYHIAQNDSPTLQSNEWTDSFRRFVDYCLQKIPQERPTSAELLRHDFVRRDRPLRVLIDLIQRTKDAVRELDNLQYRKMKKILFQETRNGPLNESQEDEEDSEHGTSLNREMDSLGSNHSIPSMSVSTGSQSSSVNSMQEVMDESSSELVMMHDDESTINSSSSVVHKKDHVFIRDEAGHGDPRPEPRPTQSVQSQALHYRNRERFATIKSASLVTRQIHEHEQENELREQMSGYKRMRRQHQKQLIALENKLKAEMDEHRLKLQKEVETHANNSSIELEKLAKKQVAIIEKEAKVAAADEKKFQQQILAQQKKDLTTFLESQKKQYKICKEKIKEEMNEDHSTPKKEKQERISKHKENLQHTQAEEEAHLLTQQRLYYDKNCRFFKRKIMIKRHEVEQQNIREELNKKRTQKEMEHAMLIRHDESTRELEYRQLHTLQKLRMDLIRLQHQTELENQLEYNKRRERELHRKHVMELRQQPKNLKAMEMQIKKQFQDTCKVQTKQYKALKNHQLEVTPKNEHKTILKTLKDEQTRKLAILAEQYEQSINEMMASQALRLDEAQEAECQALRLQLQQEMELLNAYQSKIKMQTEAQHERELQKLEQRVSLRRAHLEQKIEEELAALQKERSERIKNLLERQEREIETFDMESLRMGFGNLVTLDFPKEDYR.

One can recognise a Protein kinase domain in the interval 24–277; sequence FIGLHEIGHG…SAELLRHDFV (254 aa). ATP contacts are provided by residues 30–38 and K53; that span reads IGHGSFGAV. D147 serves as the catalytic Proton acceptor. 2 disordered regions span residues 316–362 and 405–425; these read TRNG…SQSS and DEAG…VQSQ. S324 carries the post-translational modification Phosphoserine; by ATM. Phosphoserine occurs at positions 331, 343, 346, and 349. Positions 334–351 are enriched in polar residues; sequence GTSLNREMDSLGSNHSIP. The segment covering 352 to 362 has biased composition (low complexity); sequence SMSVSTGSQSS. At T357 the chain carries Phosphothreonine. Residue S359 is modified to Phosphoserine. The span at 405–416 shows a compositional bias: basic and acidic residues; that stretch reads DEAGHGDPRPEP. S442 is subject to Phosphoserine. 3 coiled-coil regions span residues 452-502, 548-649, and 754-879; these read EQEN…THAN, FLES…HAML, and LKTL…DMES. A disordered region spans residues 565 to 596; that stretch reads EEMNEDHSTPKKEKQERISKHKENLQHTQAEE. K830 carries the N6-acetyllysine modification.

This sequence belongs to the protein kinase superfamily. STE Ser/Thr protein kinase family. STE20 subfamily. Self-associates. Interacts with ERN1 and TRAF2. Interaction with TRAF2 is facilitated under ER stress conditions, such as treatment with tunicamycin, and may promote TRAF2 phosphorylation. Interacts (via N-terminus) with STK25; the interaction promotes STK25 abundance at the level of protein expression and/or stability. In terms of processing, autophosphorylated. Phosphorylation at Ser-324 by ATM following DNA damage is required for activation of the p38/MAPK14 stress-activated MAPK cascade. Phosphorylated at Ser-324 and on Tyr residues during T cell activation. Phosphorylated by LRRK2.

Its subcellular location is the cytoplasm. It localises to the cell membrane. The protein resides in the membrane raft. It is found in the lipid droplet. The enzyme catalyses L-seryl-[protein] + ATP = O-phospho-L-seryl-[protein] + ADP + H(+). It carries out the reaction L-threonyl-[protein] + ATP = O-phospho-L-threonyl-[protein] + ADP + H(+). Its function is as follows. Serine/threonine-protein kinase that acts as a regulator of the p38/MAPK14 stress-activated MAPK cascade and of the MAPK8/JNK cascade. In response to DNA damage, involved in the G2/M transition DNA damage checkpoint by activating the p38/MAPK14 stress-activated MAPK cascade, probably by mediating phosphorylation of upstream MAP2K3 and MAP2K6 kinases. Inhibits basal activity of the MAPK8/JNK cascade and diminishes its activation in response to epidermal growth factor (EGF). Positively regulates canonical T cell receptor (TCR) signaling by preventing early PTPN6/SHP1-mediated inactivation of LCK, ensuring sustained TCR signaling that is required for optimal activation and differentiation of T cells. Phosphorylates PTPN6/SHP1 on 'Thr-394', leading to its polyubiquitination and subsequent proteasomal degradation. Required for cell surface expression of metalloprotease ADAM10 on type 1 transitional B cells which is necessary for their NOTCH-mediated development into marginal zone B cells. Also required for the NOTCH-mediated terminal differentiation of splenic conventional type 2 dendritic cells. Positively regulates osteoblast differentiation by acting as an upstream activator of the JNK pathway. Promotes JNK signaling in hepatocytes and positively regulates hepatocyte lipid storage by inhibiting beta-oxidation and triacylglycerol secretion while enhancing lipid synthesis. Restricts age-associated inflammation by negatively regulating differentiation of macrophages and their production of pro-inflammatory cytokines. Plays a role in negatively regulating the abundance of regulatory T cells in white adipose tissue. This Pongo abelii (Sumatran orangutan) protein is Serine/threonine-protein kinase TAO3 (TAOK3).